Consider the following 217-residue polypeptide: Large ribosomal subunit protein uL3 (217 aa).

Residue Q152 is modified to N5-methylglutamine.

The protein belongs to the universal ribosomal protein uL3 family. In terms of assembly, part of the 50S ribosomal subunit. Forms a cluster with proteins L14 and L19. In terms of processing, methylated by PrmB.

Its function is as follows. One of the primary rRNA binding proteins, it binds directly near the 3'-end of the 23S rRNA, where it nucleates assembly of the 50S subunit. This chain is Large ribosomal subunit protein uL3, found in Blochmanniella pennsylvanica (strain BPEN).